The primary structure comprises 585 residues: Frizzled-5 (585 aa).

Residues 1-26 form the signal peptide; it reads MARPDPSAPPSLLLLLLAQLVGRAAA. At 27 to 238 the chain is on the extracellular side; the sequence is ASKAPVCQEI…ADERTFATFW (212 aa). Residues 28-150 enclose the FZ domain; it reads SKAPVCQEIT…RDAEVLCMDY (123 aa). 5 disulfide bridges follow: C33-C94, C41-C87, C78-C116, C105-C147, and C109-C133. N47 is a glycosylation site (N-linked (GlcNAc...) asparagine). N151 carries an N-linked (GlcNAc...) asparagine glycan. The interval 156–179 is disordered; that stretch reads TTAPPRPFPAKPTLPGPPGAPASG. Residues 159–175 are compositionally biased toward pro residues; that stretch reads PPRPFPAKPTLPGPPGA. A helical membrane pass occupies residues 239–259; it reads IGLWSVLCFISTSTTVATFLI. The Cytoplasmic segment spans residues 260 to 270; that stretch reads DMERFRYPERP. Residues 271–291 traverse the membrane as a helical segment; sequence IIFLSACYLCVSLGFLVRLVV. At 292 to 315 the chain is on the extracellular side; the sequence is GHASVACSREHNHIHYETTGPALC. Residues 316–336 traverse the membrane as a helical segment; that stretch reads TIVFLLVYFFGMASSIWWVIL. Topologically, residues 337–358 are cytoplasmic; sequence SLTWFLAAGMKWGNEAIAGYAQ. A helical membrane pass occupies residues 359–379; that stretch reads YFHLAAWLIPSVKSITALALS. Residues 380-402 are Extracellular-facing; sequence SVDGDPVAGICYVGNQNLNSLRG. The chain crosses the membrane as a helical span at residues 403–423; that stretch reads FVLGPLVLYLLVGTLFLLAGF. The Cytoplasmic portion of the chain corresponds to 424-449; sequence VSLFRIRSVIKQGGTKTDKLEKLMIR. The helical transmembrane segment at 450-470 threads the bilayer; that stretch reads IGIFTLLYTVPASIVVACYLY. At 471–500 the chain is on the extracellular side; the sequence is EQHYRESWEAALTCACPGHDTGQPRAKPEY. A helical membrane pass occupies residues 501–521; the sequence is WVLMLKYFMCLVVGITSGVWI. The Cytoplasmic portion of the chain corresponds to 522-585; it reads WSGKTVESWR…YHKQVSLSHV (64 aa). Residues 525 to 530 carry the Lys-Thr-X-X-X-Trp motif, mediates interaction with the PDZ domain of Dvl family members motif; sequence KTVESW. The short motif at 583-585 is the PDZ-binding element; that stretch reads SHV.

It belongs to the G-protein coupled receptor Fz/Smo family. Binding of unsaturated fatty acid molecules (via FZ domain) promotes homodimerization. Interacts with WNT2B. Interacts with WNT3A. Interacts with WNT7A. Interacts with GOPC. Ubiquitinated by RNF43 and ZNRF3, leading to its degradation by the proteasome.

Its subcellular location is the cell membrane. It is found in the golgi apparatus membrane. The protein localises to the synapse. It localises to the perikaryon. The protein resides in the cell projection. Its subcellular location is the dendrite. It is found in the axon. In terms of biological role, receptor for Wnt proteins. Functions in the canonical Wnt/beta-catenin signaling pathway. In vitro activates WNT2, WNT10B, WNT5A, but not WNT2B or WNT4 signaling. In neurons, activation by WNT7A promotes formation of synapses. May be involved in transduction and intercellular transmission of polarity information during tissue morphogenesis and/or in differentiated tissues. Plays a role in yolk sac angiogenesis and in placental vascularization. Plays a role in ocular development. The protein is Frizzled-5 (FZD5) of Homo sapiens (Human).